The following is a 352-amino-acid chain: N-terminal EF-hand calcium-binding protein 1 (352 aa).

Serine 4 is subject to Phosphoserine. 2 EF-hand domains span residues 26-61 and 60-95; these read KGMS…GVLS and LSGE…HLGE. Residues aspartate 39, asparagine 41, aspartate 43, lysine 45, and glutamate 50 each contribute to the Ca(2+) site. Residues 135-163 are a coiled coil; it reads LLKETLNQLQSLQNSLECAMETTEEQTRQ. The interval 155–202 is disordered; sequence ETTEEQTRQERQGPSKPEVLSIQWPGKRSSRRVQRHNSFSPNSPQFNV. Residues 190–202 show a composition bias toward polar residues; sequence HNSFSPNSPQFNV. Serine 192 and serine 197 each carry phosphoserine. The stretch at 209-275 forms a coiled coil; the sequence is EEDNQWMTQI…EEFQLALKHY (67 aa). The 89-residue stretch at 252–340 folds into the ABM domain; that stretch reads MLVQRQMSVT…LETPELTSTM (89 aa).

In terms of assembly, interacts with STX1. May interact with CPNE6. In terms of tissue distribution, expressed in brain (at protein level). Expressed in the cerebral cortex only in layer 4, thalamic nuclei (the mediodorsal nucleus), hippocampus (a small band of pyramidal neurons at the boundary between CA1 and CA3), interneurons interspersed throughout the hippocampus proper, interneurons in the hilus, bodies of the neurons but also their dendritic projections (at protein level).

The protein resides in the cytoplasm. The polypeptide is N-terminal EF-hand calcium-binding protein 1 (Necab1) (Mus musculus (Mouse)).